The primary structure comprises 44 residues: Photosystem I reaction center subunit IX (44 aa).

Residues 7–27 (YLSVAPVLSTLWFASLAGLLI) traverse the membrane as a helical segment.

Belongs to the PsaJ family.

It localises to the plastid. The protein resides in the chloroplast thylakoid membrane. Its function is as follows. May help in the organization of the PsaE and PsaF subunits. This chain is Photosystem I reaction center subunit IX, found in Barbarea verna (Land cress).